Reading from the N-terminus, the 296-residue chain is Cytidine deaminase (296 aa).

CMP/dCMP-type deaminase domains follow at residues 52-167 (SPVE…YLPD) and 191-296 (QGHD…YISL). Substrate is bound at residue 93–95 (NQE). His106 provides a ligand contact to Zn(2+). The active-site Proton donor is Glu108. Residues Cys133 and Cys136 each contribute to the Zn(2+) site.

Belongs to the cytidine and deoxycytidylate deaminase family. In terms of assembly, homodimer. Zn(2+) serves as cofactor.

The catalysed reaction is cytidine + H2O + H(+) = uridine + NH4(+). It catalyses the reaction 2'-deoxycytidine + H2O + H(+) = 2'-deoxyuridine + NH4(+). In terms of biological role, this enzyme scavenges exogenous and endogenous cytidine and 2'-deoxycytidine for UMP synthesis. The polypeptide is Cytidine deaminase (Mannheimia succiniciproducens (strain KCTC 0769BP / MBEL55E)).